Here is a 426-residue protein sequence, read N- to C-terminus: MTRTNLDFLTETDPAIAGLLQQELQRQQDHLELIASENFTSAAVLAAQGSVLTNKYAEGLPGKRYYGGCEYIDKVEQLAIDRAKDLFQAAHANVQPHSGAQANFAVFLALLQPGDTIMGMDLSHGGHLTHGSPVNVSGKWFRVVHYGVDPVTEQLDYEKIRQLAHQHRPKLIICGYSAYPRIIQFDQFRAIADEVGAYLLADMAHIAGLVATGHHPSPIPVCDVVTTTTHKTLRGPRGGLILTRDPELGKKLDKAVFPGNQGGPLEHVIAAKAVAFGEALRPEFKTYSAQVIKNAQALSQQLQQRGFKIVSNGTDNHLLLVDLRSIGMTGKLADQLVSEVNITANKNTVPFDPESPFVTSGLRLGSAAMTTRGMGTPEFIEIANIIADRLLNPEDLAIVQECRQRVAQLCDRFPLYPHLSRVPVLS.

(6S)-5,6,7,8-tetrahydrofolate-binding positions include Leu122 and 126-128; that span reads GHL. Lys231 bears the N6-(pyridoxal phosphate)lysine mark. Residues Glu247 and 355 to 357 contribute to the (6S)-5,6,7,8-tetrahydrofolate site; that span reads SPF.

This sequence belongs to the SHMT family. In terms of assembly, homodimer. The cofactor is pyridoxal 5'-phosphate.

It is found in the cytoplasm. It catalyses the reaction (6R)-5,10-methylene-5,6,7,8-tetrahydrofolate + glycine + H2O = (6S)-5,6,7,8-tetrahydrofolate + L-serine. It functions in the pathway one-carbon metabolism; tetrahydrofolate interconversion. Its pathway is amino-acid biosynthesis; glycine biosynthesis; glycine from L-serine: step 1/1. In terms of biological role, catalyzes the reversible interconversion of serine and glycine with tetrahydrofolate (THF) serving as the one-carbon carrier. This reaction serves as the major source of one-carbon groups required for the biosynthesis of purines, thymidylate, methionine, and other important biomolecules. Also exhibits THF-independent aldolase activity toward beta-hydroxyamino acids, producing glycine and aldehydes, via a retro-aldol mechanism. The chain is Serine hydroxymethyltransferase from Cyanothece sp. (strain PCC 7425 / ATCC 29141).